The sequence spans 616 residues: Spastin (616 aa).

A disordered region spans residues 1-44; the sequence is MNSPGGRGKKKGSGGPSSPVPPRPPPPCLASSRPAPRPAPPPQS. The segment at 1-50 is required for nuclear localization; the sequence is MNSPGGRGKKKGSGGPSSPVPPRPPPPCLASSRPAPRPAPPPQSPHKRNL. Residues 1–56 are Cytoplasmic-facing; it reads MNSPGGRGKKKGSGGPSSPVPPRPPPPCLASSRPAPRPAPPPQSPHKRNLYYFSYP. The interval 1–80 is required for interaction with ATL1; sequence MNSPGGRGKK…LGLLFVWLCQ (80 aa). The tract at residues 1–194 is required for midbody localization; it reads MNSPGGRGKK…LVMAKDRLQL (194 aa). The segment at 1-300 is required for interaction with RTN1; sequence MNSPGGRGKK…STPKTNRTNK (300 aa). The Nuclear localization signal signature appears at 4-11; the sequence is PGGRGKKK. 2 stretches are compositionally biased toward pro residues: residues 18–28 and 35–44; these read SPVPPRPPPPC and APRPAPPPQS. Residues 50 to 87 are required for interaction with SSNA1 and microtubules; sequence LYYFSYPLFLGFALLRLVAFHLGLLFVWLCQRFSRALM. The helical intramembrane region spans 57-77; the sequence is LFLGFALLRLVAFHLGLLFVW. The short motif at 59–67 is the Nuclear export signal element; that stretch reads LGFALLRLV. Over 78–616 the chain is Cytoplasmic; the sequence is LCQRFSRALM…WNKDFGDTTV (539 aa). The interval 112-196 is sufficient for interaction with CHMP1B; the sequence is EVERVRAFHK…MAKDRLQLLE (85 aa). The interval 114–200 is required for interaction with microtubules; it reads ERVRAFHKQA…RLQLLEKLQP (87 aa). The MIT domain occupies 120–195; sequence HKQAFEYISV…VMAKDRLQLL (76 aa). The segment at 223–266 is disordered; sequence GHLQSESGAVPKRKDPLTHPSNSLPRSKAIMKTGSTGLSGHHRA. The interval 226 to 328 is sufficient for interaction with microtubules; the sequence is QSESGAVPKR…NVDSNLANFI (103 aa). The sufficient for microtubule severing stretch occupies residues 228–616; it reads ESGAVPKRKD…WNKDFGDTTV (389 aa). Phosphoserine occurs at positions 245 and 268. Residues 270–328 are required for interaction with microtubules and microtubule severing; it reads SGLSIVSGMRQGPGPTTATHKSTPKTNRTNKPSTPTTAPRKKKDLKNFRNVDSNLANFI. A disordered region spans residues 278-311; the sequence is MRQGPGPTTATHKSTPKTNRTNKPSTPTTAPRKK. Positions 283 to 306 are enriched in polar residues; it reads GPTTATHKSTPKTNRTNKPSTPTT. A Phosphothreonine modification is found at T306. The short motif at 309–312 is the Nuclear localization signal element; it reads RKKK. The tract at residues 310 to 312 is required for interaction with microtubules; it reads KKK. An ATP-binding site is contributed by 382–389; it reads GPPGNGKT. A Phosphoserine modification is found at S597.

The protein belongs to the AAA ATPase family. Spastin subfamily. Homohexamer. Mostly monomeric, but assembles into hexameric structure for short periods of time. Oligomerization seems to be a prerequisite for catalytic activity. Binding to ATP in a cleft between two adjacent subunits stabilizes the homohexameric form. Binds to microtubules at least in part via the alpha-tubulin and beta-tubulin tails. The hexamer adopts a ring conformation through which microtubules pass prior to being severed. Does not interact strongly with tubulin heterodimers. Interacts (via MIT domain) with CHMP1B; the interaction is direct. Interacts with SSNA1. Interacts with ATL1. Interacts with RTN1. Interacts with ZFYVE27. Interacts with REEP1. Interacts (via MIT domain) with IST1.

The protein resides in the membrane. It is found in the endoplasmic reticulum. The protein localises to the midbody. It localises to the cytoplasm. Its subcellular location is the cytoskeleton. The protein resides in the microtubule organizing center. It is found in the centrosome. The protein localises to the perinuclear region. It localises to the nucleus. Its subcellular location is the spindle. The protein resides in the cell projection. It is found in the axon. It catalyses the reaction n ATP + n H2O + a microtubule = n ADP + n phosphate + (n+1) alpha/beta tubulin heterodimers.. Allosteric enzyme with a cooperative mechanism; at least two neighbor subunits influence each other strongly in spastin hexamers. Microtubule binding promotes cooperative interactions among spastin subunits. Its function is as follows. ATP-dependent microtubule severing protein that specifically recognizes and cuts microtubules that are polyglutamylated. Preferentially recognizes and acts on microtubules decorated with short polyglutamate tails: severing activity increases as the number of glutamates per tubulin rises from one to eight, but decreases beyond this glutamylation threshold. Severing activity is not dependent on tubulin acetylation or detyrosination. Microtubule severing promotes reorganization of cellular microtubule arrays and the release of microtubules from the centrosome following nucleation. It is critical for the biogenesis and maintenance of complex microtubule arrays in axons, spindles and cilia. SPAST is involved in abscission step of cytokinesis and nuclear envelope reassembly during anaphase in cooperation with the ESCRT-III complex. Recruited at the midbody, probably by IST1, and participates in membrane fission during abscission together with the ESCRT-III complex. Recruited to the nuclear membrane by IST1 and mediates microtubule severing, promoting nuclear envelope sealing and mitotic spindle disassembly during late anaphase. Required for membrane traffic from the endoplasmic reticulum (ER) to the Golgi and endosome recycling. Recruited by IST1 to endosomes and regulates early endosomal tubulation and recycling by mediating microtubule severing. Probably plays a role in axon growth and the formation of axonal branches. The polypeptide is Spastin (Sus scrofa (Pig)).